The chain runs to 2793 residues: Iterative polyketide synthase afoE (2793 aa).

An N-terminal acylcarrier protein transacylase domain (SAT) region spans residues 1–401 (MTRASASGSG…PEKPSFWLTP (401 aa)). Catalysis depends on Cys157, which acts as the Nucleophile; for transacylase activity. The active-site Proton donor/acceptor; for transacylase activity is His279. The Ketosynthase family 3 (KS3) domain occupies 435–862 (SEPIAIVGMS…GSNASMIVTQ (428 aa)). Residues Cys611, His746, and His785 each act as for beta-ketoacyl synthase activity in the active site. The malonyl-CoA:ACP transacylase (MAT) stretch occupies residues 977 to 1265 (FGGQISRFVG…SSTITVMAGR (289 aa)). The interval 1384 to 1515 (WEFVGYQDDE…ATVEMRSSSD (132 aa)) is N-terminal hotdog fold. Residues 1384 to 1698 (WEFVGYQDDE…YMRVAKASMS (315 aa)) form the PKS/mFAS DH domain. Residues 1411–1696 (YVLSHVIAQT…VQYMRVAKAS (286 aa)) form a product template (PT) domain region. His1415 acts as the Proton acceptor; for dehydratase activity in catalysis. Residues 1550–1698 (VEVLQGRNVY…YMRVAKASMS (149 aa)) form a C-terminal hotdog fold region. The active-site Proton donor; for dehydratase activity is Asp1607. The disordered stretch occupies residues 1734 to 1776 (PEVRASSEPGAKVKASKTSKKEKKEKKPVTKAKSKSSKPSGWR). Basic residues predominate over residues 1747–1769 (KASKTSKKEKKEKKPVTKAKSKS). The Carrier domain occupies 1776-1850 (RDITEEVRNL…KFVQCVSNAL (75 aa)). Ser1810 carries the post-translational modification O-(pantetheine 4'-phosphoryl)serine. The interval 1853-1903 (PNAGPAEAEDDEDEEKSDNSSSESASESDDAGSESSDTGILTPTGEEEQPL) is disordered. Residues 1859–1868 (EAEDDEDEEK) show a composition bias toward acidic residues. Residues 2115–2294 (NLLAERIGRT…HVDWTDGNLP (180 aa)) form a methyltransferase domain region. Residues 2360–2379 (SRAEKESGKTQAPHAAPGRR) are disordered. The segment at 2387–2630 (VTGATGSLGS…QWIPVDYCAA (244 aa)) is NADPH-binding domain.

Pantetheine 4'-phosphate is required as a cofactor.

It carries out the reaction (3E,5E,7S)-5,7-dimethyl-2-oxonona-3,5-dienyl-[ACP] + 4 malonyl-CoA + AH2 + S-adenosyl-L-methionine + 3 H(+) = 6-[(3E,5E,7S)-5,7-dimethyl-2-oxonona-3,5-dienyl]-2,4-dihydroxy-3-methylbenzaldehyde + holo-[ACP] + A + S-adenosyl-L-homocysteine + 4 CO2 + 4 CoA + H2O. It functions in the pathway secondary metabolite biosynthesis. Its function is as follows. Iterative polyketide synthase; part of the gene cluster that mediates the biosynthesis of asperfuranone, a probable antitumor agent. The polyketide synthase afoG is responsible for producing the 3,5-dimethyloctadienone moiety from acetyl-CoA, three malonyl-CoA, and two S-adenosyl methionines (SAM). The 3,5-dimethyloctadienone moiety is then loaded onto the SAT domain of afoE and extended with four malonyl-CoA and one SAM, which leads to the formation of 2,4-dihydroxy-6-(5,7-dimethyl-2-oxo-trans-3-trans-5-nonadienyl)-3-methylbenzaldehyde (compound 2) after reductive release and aldol condensation. AfoD is the next enzyme in the biosynthesis sequence and hydroxylates the side chain at the benzylic position of compound 2. After benzylic hydroxylation, a furan ring is formed after five-member ring hemiacetal formation and water elimination. AfoF and afoC are proposed to oxidize the R-diketone proton and to reduce the unconjugated carbonyl group, respectively, to generate asperfuranone. Since no intermediates could be isolated from afoF and afoC deletants, the sequence of these two enzymes is not fully understood. Moreover, since afoC deletant still produces a small amount of asperfuranone, other endogenous oxidoreductases might catalyze the same reaction with much less efficiency. The sequence is that of Iterative polyketide synthase afoE from Emericella nidulans (strain FGSC A4 / ATCC 38163 / CBS 112.46 / NRRL 194 / M139) (Aspergillus nidulans).